A 260-amino-acid polypeptide reads, in one-letter code: Oxidoreductase macE (260 aa).

This sequence belongs to the oxidoreductase OpS7 family.

The protein operates within secondary metabolite biosynthesis; terpenoid biosynthesis. Functionally, oxidoreductase; part of the gene cluster that mediates the biosynthesis of macrophorins, isoprenoid epoxycyclohexenones containing cyclized drimane moieties. The first step of the pathway is the synthesis of 6-methylsalicylic acid (6-MSA) by the polyketide synthase macA. 6-MSA is then converted to m-cresol by the decarboxylase macB. The cytochrome P450 monooxygenase macC then catalyzes the oxidation of m-cresol to toluquinol. Epoxidation of toluquinol is then performed by the short chain dehydrogenase macD, with the help of macE, and a further prenylation by macG leads to 7-deacetoxyyanuthone A. The next step is the hydroxylation of C-22 of 7-deacetoxyyanuthone A by the cytochrome P450 monooxygenase macH to yield 22-deacetylyanuthone A. O-Mevalon transferase macI then attaches mevalon to the hydroxyl group of 22-deacetylyanuthone A to produce yanuthone E. The terpene cyclase macJ catalyzes the cyclization of 22-deacetylyanuthone A to macrophorin A. MacJ is also able to catalyze cyclization of yanuthone E and 7-deacetoxyyanuthone A to their corresponding macrophorins. The macJ products can be further modified by macH and macJ, as well as by the FAD-dependent monooxygenase macF, to produce additional macrophorins, including 4'-oxomacrophorin A, 4'-oxomacrophorin D and 4'-oxomacrophorin E. The sequence is that of Oxidoreductase macE from Penicillium terrestre.